A 385-amino-acid chain; its full sequence is tRNA(Met) cytidine acetate ligase (385 aa).

ATP contacts are provided by residues 7 to 20 (VAEY…HEFL), Gly101, Asn153, and Arg178.

The protein belongs to the TmcAL family.

The protein resides in the cytoplasm. It carries out the reaction cytidine(34) in elongator tRNA(Met) + acetate + ATP = N(4)-acetylcytidine(34) in elongator tRNA(Met) + AMP + diphosphate. Catalyzes the formation of N(4)-acetylcytidine (ac(4)C) at the wobble position of elongator tRNA(Met), using acetate and ATP as substrates. First activates an acetate ion to form acetyladenylate (Ac-AMP) and then transfers the acetyl group to tRNA to form ac(4)C34. The chain is tRNA(Met) cytidine acetate ligase from Lactobacillus gasseri (strain ATCC 33323 / DSM 20243 / BCRC 14619 / CIP 102991 / JCM 1131 / KCTC 3163 / NCIMB 11718 / NCTC 13722 / AM63).